The chain runs to 1417 residues: DNA-directed RNA polymerase subunit beta' (1417 aa).

Zn(2+) is bound by residues C68, C70, C83, and C86. Positions 458, 460, and 462 each coordinate Mg(2+). The Zn(2+) site is built by C811, C884, C891, and C894.

Belongs to the RNA polymerase beta' chain family. In terms of assembly, the RNAP catalytic core consists of 2 alpha, 1 beta, 1 beta' and 1 omega subunit. When a sigma factor is associated with the core the holoenzyme is formed, which can initiate transcription. The cofactor is Mg(2+). Zn(2+) serves as cofactor.

The catalysed reaction is RNA(n) + a ribonucleoside 5'-triphosphate = RNA(n+1) + diphosphate. Functionally, DNA-dependent RNA polymerase catalyzes the transcription of DNA into RNA using the four ribonucleoside triphosphates as substrates. The sequence is that of DNA-directed RNA polymerase subunit beta' from Francisella tularensis subsp. mediasiatica (strain FSC147).